The primary structure comprises 384 residues: 3,7-dimethylxanthine N-methyltransferase 2 (384 aa).

Residues Tyr-18, Cys-61, Asn-66, Asp-100, Leu-101, Ser-139, Phe-140, and Cys-156 each contribute to the S-adenosyl-L-homocysteine site. Tyr-157 lines the theobromine pocket. S-adenosyl-L-homocysteine is bound at residue Cys-158. Theobromine-binding residues include His-160 and Trp-161. Asn-178 contacts Mg(2+). Ser-237 contacts theobromine. The Mg(2+) site is built by Asp-260, Phe-262, and Asn-263. Tyr-368 is a binding site for theobromine.

Belongs to the methyltransferase superfamily. Type-7 methyltransferase family. The cofactor is Mg(2+). Highly expressed in developing endosperm. Detected in young leaves and flower buds. Present in immature fruits (grains), but barely in mature fruits.

It catalyses the reaction 7-methylxanthine + S-adenosyl-L-methionine = theobromine + S-adenosyl-L-homocysteine + H(+). The enzyme catalyses theobromine + S-adenosyl-L-methionine = caffeine + S-adenosyl-L-homocysteine + H(+). The catalysed reaction is 1,7-dimethylxanthine + S-adenosyl-L-methionine = caffeine + S-adenosyl-L-homocysteine + H(+). Its pathway is alkaloid biosynthesis. Involved in the biosynthesis of caffeine. Catalyzes the conversion of 7-methylxanthine (7mX) to theobromine and of theobromine to caffeine. Has 1-N-methylation activity. The protein is 3,7-dimethylxanthine N-methyltransferase 2 of Coffea arabica (Arabian coffee).